The following is a 191-amino-acid chain: Large ribosomal subunit protein bL9c (191 aa).

A chloroplast-targeting transit peptide spans 1-35; it reads MASPSCASTLPWTAAAFSYPRRLQTRRAPSLVIVA.

Belongs to the bacterial ribosomal protein bL9 family. In terms of assembly, part of the 50S ribosomal subunit.

It is found in the plastid. The protein localises to the chloroplast. Functionally, binds to the 23S rRNA. This is Large ribosomal subunit protein bL9c (RPL9) from Triticum aestivum (Wheat).